Here is a 176-residue protein sequence, read N- to C-terminus: Membrane glycoprotein UL144 (176 aa).

The first 20 residues, 1 to 20 (MKPLVMLICFGVILLQLGVT), serve as a signal peptide directing secretion. The TNFR-Cys repeat unit spans residues 58–95 (PCPNGTYVSGLYNCTDCTQCNVTQVMIRNCTSTNNTVC). Cystine bridges form between Cys59–Cys71, Cys74–Cys87, and Cys77–Cys95. The helical transmembrane segment at 134–154 (LAWLSLFIFLVGIILLILYLI) threads the bilayer.

In terms of assembly, interacts with host TRIM23; this interaction causes auto-ubiquitination of TRAF6, leading to NF-kappaB activation.

The protein resides in the membrane. In terms of biological role, activates NF-kappa-B in a tumor necrosis factor receptor (TNFR)-associated factor 6 (TRAF6)-dependent manner, causing the up-regulation of the chemokine CCL22. This chain is Membrane glycoprotein UL144 (UL144), found in Human cytomegalovirus (strain Merlin) (HHV-5).